We begin with the raw amino-acid sequence, 460 residues long: Indoleacetamide hydrolase (460 aa).

Residues Lys-71 and Ser-146 each act as charge relay system in the active site. The Acyl-ester intermediate role is filled by Ser-169.

Belongs to the amidase family.

It participates in plant hormone metabolism; auxin biosynthesis. Hydrolyzes indole-3-acetamide (IAM) into indole-3-acetic acid (IAA). This chain is Indoleacetamide hydrolase (iaaH), found in Pantoea agglomerans pv. gypsophilae (Erwinia herbicola).